The following is a 217-amino-acid chain: Somatotropin (217 aa).

A signal peptide spans 1 to 24 (MAAGSWTSLLLAFTLLCLPQLREA). A Zn(2+)-binding site is contributed by His-44. Cys-79 and Cys-191 are oxidised to a cystine. A Phosphoserine modification is found at Ser-132. Position 200 (Glu-200) interacts with Zn(2+). A disulfide bridge connects residues Cys-208 and Cys-215.

It belongs to the somatotropin/prolactin family.

Its subcellular location is the secreted. Functionally, plays an important role in growth control. Its major role in stimulating body growth is to stimulate the liver and other tissues to secrete IGF1. It stimulates both the differentiation and proliferation of myoblasts. It also stimulates amino acid uptake and protein synthesis in muscle and other tissues. In Callithrix jacchus (White-tufted-ear marmoset), this protein is Somatotropin (GH1).